A 140-amino-acid chain; its full sequence is Large ribosomal subunit protein uL11 (140 aa).

This sequence belongs to the universal ribosomal protein uL11 family. In terms of assembly, part of the ribosomal stalk of the 50S ribosomal subunit. Interacts with L10 and the large rRNA to form the base of the stalk. L10 forms an elongated spine to which L12 dimers bind in a sequential fashion forming a multimeric L10(L12)X complex. Post-translationally, one or more lysine residues are methylated.

In terms of biological role, forms part of the ribosomal stalk which helps the ribosome interact with GTP-bound translation factors. This Dehalococcoides mccartyi (strain ATCC BAA-2100 / JCM 16839 / KCTC 5957 / BAV1) protein is Large ribosomal subunit protein uL11.